Reading from the N-terminus, the 181-residue chain is Protein GrpE (181 aa).

Residues Met-1 to Ser-12 are compositionally biased toward polar residues. Residues Met-1–Ala-33 are disordered. Residues Gln-21–Ala-33 show a composition bias toward low complexity.

Belongs to the GrpE family. In terms of assembly, homodimer.

The protein localises to the cytoplasm. Functionally, participates actively in the response to hyperosmotic and heat shock by preventing the aggregation of stress-denatured proteins, in association with DnaK and GrpE. It is the nucleotide exchange factor for DnaK and may function as a thermosensor. Unfolded proteins bind initially to DnaJ; upon interaction with the DnaJ-bound protein, DnaK hydrolyzes its bound ATP, resulting in the formation of a stable complex. GrpE releases ADP from DnaK; ATP binding to DnaK triggers the release of the substrate protein, thus completing the reaction cycle. Several rounds of ATP-dependent interactions between DnaJ, DnaK and GrpE are required for fully efficient folding. The protein is Protein GrpE of Burkholderia cenocepacia (strain HI2424).